The chain runs to 370 residues: GTPase Obg (370 aa).

The Obg domain occupies 1–159 (MKFIDEARIE…RMLRLELKVL (159 aa)). One can recognise an OBG-type G domain in the interval 160 to 334 (ADVGLLGMPN…LCYAIYDYLA (175 aa)). GTP-binding positions include 166–173 (GMPNAGKS), 191–195 (FTTLA), 213–216 (DIPG), 284–287 (NKLD), and 315–317 (SAL). Positions 173 and 193 each coordinate Mg(2+). Residues 344–370 (EEEDLATDVRFRDAPPADGGATPGGDA) are disordered.

This sequence belongs to the TRAFAC class OBG-HflX-like GTPase superfamily. OBG GTPase family. In terms of assembly, monomer. The cofactor is Mg(2+).

The protein localises to the cytoplasm. An essential GTPase which binds GTP, GDP and possibly (p)ppGpp with moderate affinity, with high nucleotide exchange rates and a fairly low GTP hydrolysis rate. Plays a role in control of the cell cycle, stress response, ribosome biogenesis and in those bacteria that undergo differentiation, in morphogenesis control. This is GTPase Obg from Burkholderia ambifaria (strain MC40-6).